The chain runs to 511 residues: Bifunctional purine biosynthesis protein PurH (511 aa).

One can recognise an MGS-like domain in the interval 1–145 (MKKRALVSVS…KNHKFVSVIV (145 aa)).

It belongs to the PurH family.

The enzyme catalyses (6R)-10-formyltetrahydrofolate + 5-amino-1-(5-phospho-beta-D-ribosyl)imidazole-4-carboxamide = 5-formamido-1-(5-phospho-D-ribosyl)imidazole-4-carboxamide + (6S)-5,6,7,8-tetrahydrofolate. The catalysed reaction is IMP + H2O = 5-formamido-1-(5-phospho-D-ribosyl)imidazole-4-carboxamide. It functions in the pathway purine metabolism; IMP biosynthesis via de novo pathway; 5-formamido-1-(5-phospho-D-ribosyl)imidazole-4-carboxamide from 5-amino-1-(5-phospho-D-ribosyl)imidazole-4-carboxamide (10-formyl THF route): step 1/1. It participates in purine metabolism; IMP biosynthesis via de novo pathway; IMP from 5-formamido-1-(5-phospho-D-ribosyl)imidazole-4-carboxamide: step 1/1. The chain is Bifunctional purine biosynthesis protein PurH from Bacillus cereus (strain ATCC 10987 / NRS 248).